The chain runs to 70 residues: ATP synthase subunit c (70 aa).

Transmembrane regions (helical) follow at residues 4–24 and 45–65; these read IAAA…NGLI and LMFI…VIAF.

This sequence belongs to the ATPase C chain family. As to quaternary structure, F-type ATPases have 2 components, F(1) - the catalytic core - and F(0) - the membrane proton channel. F(1) has five subunits: alpha(3), beta(3), gamma(1), delta(1), epsilon(1). F(0) has three main subunits: a(1), b(2) and c(10-14). The alpha and beta chains form an alternating ring which encloses part of the gamma chain. F(1) is attached to F(0) by a central stalk formed by the gamma and epsilon chains, while a peripheral stalk is formed by the delta and b chains.

Its subcellular location is the cell membrane. In terms of biological role, f(1)F(0) ATP synthase produces ATP from ADP in the presence of a proton or sodium gradient. F-type ATPases consist of two structural domains, F(1) containing the extramembraneous catalytic core and F(0) containing the membrane proton channel, linked together by a central stalk and a peripheral stalk. During catalysis, ATP synthesis in the catalytic domain of F(1) is coupled via a rotary mechanism of the central stalk subunits to proton translocation. This is ATP synthase subunit c from Bacillus pumilus (strain SAFR-032).